The chain runs to 198 residues: Probable GTP-binding protein EngB (198 aa).

The EngB-type G domain occupies 36–198 (SDPQFAFIGR…NLSKLQELLE (163 aa)). GTP-binding positions include 44–51 (GRSNVGKS), 70–74 (GRTQL), 88–91 (DLPG), 155–158 (NKID), and 182–184 (ISA). Mg(2+)-binding residues include Ser51 and Thr72.

The protein belongs to the TRAFAC class TrmE-Era-EngA-EngB-Septin-like GTPase superfamily. EngB GTPase family. It depends on Mg(2+) as a cofactor.

Necessary for normal cell division and for the maintenance of normal septation. In Mesomycoplasma hyopneumoniae (strain J / ATCC 25934 / NCTC 10110) (Mycoplasma hyopneumoniae), this protein is Probable GTP-binding protein EngB.